The chain runs to 157 residues: Protein Smg (157 aa).

Belongs to the Smg family.

This chain is Protein Smg, found in Escherichia coli O8 (strain IAI1).